Consider the following 41-residue polypeptide: Phospholipase A2 homolog nigroviriditoxin acidic subunit A (41 aa).

Belongs to the phospholipase A2 family. Group II subfamily. D49 sub-subfamily. Nigroviriditoxin is a heterodimer of an acidic subunit A and a basic subunit B. In terms of tissue distribution, expressed by the venom gland.

It localises to the secreted. Heterodimer A-B: Nigroviriditoxin possesses phospholipase A2 (PLA2) activity. It consists of a non-covalent association of a basic PLA2 subunit B with a non-enzymatic subunit A. Functionally, subunit A: The acidic subunit of nigroviriditoxin probably is a heterotrimer of three disulfide-linked chains generated by post-translational maturation of a PLA2-like precursor. It appears to have no PLA2 activity of its own, instead inhibiting the catalytic activity of subunit B. It is not toxic to mice by itself but increases toxicity of subunit B. This chain is Phospholipase A2 homolog nigroviriditoxin acidic subunit A, found in Bothriechis nigroviridis (Black-speckled palm pit viper).